Consider the following 280-residue polypeptide: Urease accessory protein UreD 1 (280 aa).

The protein belongs to the UreD family. UreD, UreF and UreG form a complex that acts as a GTP-hydrolysis-dependent molecular chaperone, activating the urease apoprotein by helping to assemble the nickel containing metallocenter of UreC. The UreE protein probably delivers the nickel.

The protein localises to the cytoplasm. Functionally, required for maturation of urease via the functional incorporation of the urease nickel metallocenter. The polypeptide is Urease accessory protein UreD 1 (Bradyrhizobium sp. (strain BTAi1 / ATCC BAA-1182)).